Reading from the N-terminus, the 484-residue chain is Sulfoacetaldehyde dehydrogenase (484 aa).

NAD(+) is bound by residues 105–110 (LTPVTN), Gly-188, and Gly-206. Cys-239 acts as the Nucleophile in catalysis. The NAD(+) site is built by Glu-332 and Leu-412.

It belongs to the aldehyde dehydrogenase family.

The enzyme catalyses sulfoacetaldehyde + NAD(+) + CoA = sulfoacetyl-CoA + NADH + H(+). Part of a variant of the sulfo-TK pathway, a D-sulfoquinovose degradation pathway that produces sulfoacetate. Catalyzes the oxidation of sulfoacetaldehyde (SA) to sulfoacetyl-coenzyme A (sulfoacetyl-CoA). Is highly specific for NAD(+), with only residual (1%) activity with NADP(+). Cannot use acetaldehyde. This chain is Sulfoacetaldehyde dehydrogenase, found in Acholeplasma sp.